The sequence spans 57 residues: UPF0509 protein YciZ (57 aa).

Belongs to the UPF0509 family.

The protein is UPF0509 protein YciZ (yciZ) of Escherichia coli O157:H7.